The sequence spans 339 residues: Ketol-acid reductoisomerase (NADP(+)) (339 aa).

Positions 1 to 182 (MRVYYDRDAD…GGGRAGIIET (182 aa)) constitute a KARI N-terminal Rossmann domain. Residues 24-27 (YGSQ), Arg-48, Ser-51, Ser-53, and 83-86 (DELQ) each bind NADP(+). Residue His-108 is part of the active site. Gly-134 provides a ligand contact to NADP(+). A KARI C-terminal knotted domain is found at 183–328 (TFREECETDL…ARLRDMMPWI (146 aa)). The Mg(2+) site is built by Asp-191, Glu-195, Glu-227, and Glu-231. Ser-252 is a substrate binding site.

The protein belongs to the ketol-acid reductoisomerase family. It depends on Mg(2+) as a cofactor.

It carries out the reaction (2R)-2,3-dihydroxy-3-methylbutanoate + NADP(+) = (2S)-2-acetolactate + NADPH + H(+). The enzyme catalyses (2R,3R)-2,3-dihydroxy-3-methylpentanoate + NADP(+) = (S)-2-ethyl-2-hydroxy-3-oxobutanoate + NADPH + H(+). Its pathway is amino-acid biosynthesis; L-isoleucine biosynthesis; L-isoleucine from 2-oxobutanoate: step 2/4. The protein operates within amino-acid biosynthesis; L-valine biosynthesis; L-valine from pyruvate: step 2/4. Functionally, involved in the biosynthesis of branched-chain amino acids (BCAA). Catalyzes an alkyl-migration followed by a ketol-acid reduction of (S)-2-acetolactate (S2AL) to yield (R)-2,3-dihydroxy-isovalerate. In the isomerase reaction, S2AL is rearranged via a Mg-dependent methyl migration to produce 3-hydroxy-3-methyl-2-ketobutyrate (HMKB). In the reductase reaction, this 2-ketoacid undergoes a metal-dependent reduction by NADPH to yield (R)-2,3-dihydroxy-isovalerate. This Nitrobacter winogradskyi (strain ATCC 25391 / DSM 10237 / CIP 104748 / NCIMB 11846 / Nb-255) protein is Ketol-acid reductoisomerase (NADP(+)).